The sequence spans 333 residues: Flap endonuclease 1 (333 aa).

Positions 1 to 99 (MGVALRDILA…ETNAERKKLR (99 aa)) are N-domain. 7 residues coordinate Mg(2+): aspartate 28, aspartate 81, glutamate 153, glutamate 155, aspartate 174, aspartate 176, and aspartate 235. The I-domain stretch occupies residues 117-256 (EAYRQARSAT…TALKIVKSGG (140 aa)). Residues 325-333 (GQKTLESFF) form an interaction with PCNA region.

This sequence belongs to the XPG/RAD2 endonuclease family. FEN1 subfamily. Interacts with PCNA. PCNA stimulates the nuclease activity without altering cleavage specificity. The cofactor is Mg(2+).

Its function is as follows. Structure-specific nuclease with 5'-flap endonuclease and 5'-3' exonuclease activities involved in DNA replication and repair. During DNA replication, cleaves the 5'-overhanging flap structure that is generated by displacement synthesis when DNA polymerase encounters the 5'-end of a downstream Okazaki fragment. Binds the unpaired 3'-DNA end and kinks the DNA to facilitate 5' cleavage specificity. Cleaves one nucleotide into the double-stranded DNA from the junction in flap DNA, leaving a nick for ligation. Also involved in the base excision repair (BER) pathway. Acts as a genome stabilization factor that prevents flaps from equilibrating into structures that lead to duplications and deletions. Also possesses 5'-3' exonuclease activity on nicked or gapped double-stranded DNA. In Methanoregula boonei (strain DSM 21154 / JCM 14090 / 6A8), this protein is Flap endonuclease 1.